The primary structure comprises 475 residues: Na(+)/H(+) antiporter NhaA 2 (475 aa).

12 helical membrane passes run 44–64, 92–112, 130–150, 156–176, 186–206, 211–231, 232–252, 255–275, 331–351, 368–388, 406–426, and 442–462; these read AQAT…WWAN, LKHI…GLEI, LILC…LFNW, IGWG…LTLV, AFLV…IALF, ISVI…IANY, AGVL…WTML, GVHP…RPML, ALDL…NAGV, LGIV…ACWL, VIGM…IATL, and ILFA…IIAA.

It belongs to the NhaA Na(+)/H(+) (TC 2.A.33) antiporter family.

Its subcellular location is the cell inner membrane. The enzyme catalyses Na(+)(in) + 2 H(+)(out) = Na(+)(out) + 2 H(+)(in). Its function is as follows. Na(+)/H(+) antiporter that extrudes sodium in exchange for external protons. This is Na(+)/H(+) antiporter NhaA 2 from Psychromonas ingrahamii (strain DSM 17664 / CCUG 51855 / 37).